Reading from the N-terminus, the 654-residue chain is Collagen alpha-1(XXV) chain (654 aa).

The disordered stretch occupies residues 1–26 (MLLKKHAGKGGGREPRSEDPTPAEQH). Residues 1–33 (MLLKKHAGKGGGREPRSEDPTPAEQHCARTMPP) lie on the Cytoplasmic side of the membrane. A helical; Signal-anchor for type II membrane protein transmembrane segment spans residues 34–54 (CAVLAALLSVVAVVSCLYLGV). Residues 55-654 (KTNDLQARIA…GLPMPGCWQK (600 aa)) are Extracellular-facing. Position 113 is a pyrrolidone carboxylic acid (Glu) (Glu-113). The tract at residues 116 to 168 (SECNCPAGPPGKRGKRGRRGESGPPGQPGPQGPPGPKGDKGEQGDQGPRMVFP) is disordered. Positions 121–164 (PAGPPGKRGKRGRRGESGPPGQPGPQGPPGPKGDKGEQGDQGPR) constitute a Collagen-like 1 domain. Positions 140 to 151 (PGQPGPQGPPGP) are enriched in pro residues. The interaction with amyloid-beta peptide stretch occupies residues 181–188 (LIKRRLIK). Disordered stretches follow at residues 189-426 (GDQG…QGAT) and 445-654 (LTVT…CWQK). Collagen-like domains lie at 192-247 (GQAG…QKGS), 249-308 (GAPG…PGSS), 311-370 (GIKG…AGPP), 372-425 (RGER…DQGA), and 447-505 (VTGP…PGLP). Positions 196–208 (PPGPPGPPGPRGP) are enriched in pro residues. The span at 230–245 (PGEQGLMGPLGPPGQK) shows a compositional bias: low complexity. Basic and acidic residues predominate over residues 280–290 (EPGEQGEKGDA). A compositionally biased stretch (low complexity) spans 336–358 (LPGIKGEPGFIGPQGEPGLPGLP). Composition is skewed to basic and acidic residues over residues 361–377 (KGERGEAGPPGRGERGE) and 398–407 (SKGDRGEKGD). The span at 457–466 (QGLQGPKGEQ) shows a compositional bias: low complexity. Over residues 494-503 (GEKGGIGLPG) the composition is skewed to gly residues. A compositionally biased stretch (low complexity) spans 517-527 (SGMPGPQGPSI). A compositionally biased stretch (pro residues) spans 528–543 (IGPPGPPGPHGPPGPM). In terms of domain architecture, Collagen-like 7 spans 571 to 630 (GEKGAMGEPGPRGPYGLPGKDGEPGLDGFPGPRGEKGDLGEKGEKGFRGVKGEKGEPGQP). Positions 603-626 (RGEKGDLGEKGEKGFRGVKGEKGE) are enriched in basic and acidic residues.

In terms of assembly, forms homodimers and homotrimers. Binds to the fibrillized forms of amyloid-beta protein 40 (beta-APP40) and amyloid-beta protein 42 (beta-APP42). Found associated with beta-APP42 more frequently than with beta-APP40. Undergoes proteolytic cleavage by furin protease to yield the soluble collagen-like Alzheimer amyloid plaque component. Post-translationally, glycosylated. In terms of processing, hydroxylated on 11% of proline residues and 49% of lysine residues. Expressed predominantly in brain. Deposited preferentially in primitive or neuritic amyloid plaques which are typical of Alzheimer disease.

It is found in the membrane. Functionally, inhibits fibrillization of amyloid-beta peptide during the elongation phase. Has also been shown to assemble amyloid fibrils into protease-resistant aggregates. Binds heparin. The polypeptide is Collagen alpha-1(XXV) chain (Homo sapiens (Human)).